Consider the following 327-residue polypeptide: GMP reductase (327 aa).

Catalysis depends on Cys176, which acts as the Thioimidate intermediate. Position 205-228 (205-228 (IIADGGIRTHGDIAKSIRFGATMV)) interacts with NADP(+).

The protein belongs to the IMPDH/GMPR family. GuaC type 2 subfamily.

The enzyme catalyses IMP + NH4(+) + NADP(+) = GMP + NADPH + 2 H(+). In terms of biological role, catalyzes the irreversible NADPH-dependent deamination of GMP to IMP. It functions in the conversion of nucleobase, nucleoside and nucleotide derivatives of G to A nucleotides, and in maintaining the intracellular balance of A and G nucleotides. This is GMP reductase from Streptococcus equi subsp. zooepidemicus (strain H70).